The chain runs to 245 residues: MYRYKITIEYLGTHFSGWQRQAGVLSVQQILEEAIYKFSGEQVTLFGSGRTDAGVHAIGQIAHFDLSKYLEPYKIIKAINYFVRPYAVGVWNCELVSNNFHARFSATSRHYIYRIVNRTYPSVIDLNRVWWISAPLDVLAMQQAATYLLGKHDFTSFRSSSCQSKSPIKTLTEINIIKEYEEIKLYLSAPSFLHYMVRNIVGSLVLVGKNIWQVEQIKNVLDAKDRKVAGPTAPAFGLYFIKAEY.

Catalysis depends on Asp52, which acts as the Nucleophile. Tyr111 is a binding site for substrate.

It belongs to the tRNA pseudouridine synthase TruA family. In terms of assembly, homodimer.

It carries out the reaction uridine(38/39/40) in tRNA = pseudouridine(38/39/40) in tRNA. Formation of pseudouridine at positions 38, 39 and 40 in the anticodon stem and loop of transfer RNAs. The polypeptide is tRNA pseudouridine synthase A (Rickettsia typhi (strain ATCC VR-144 / Wilmington)).